The primary structure comprises 415 residues: Glucose-1-phosphate adenylyltransferase (415 aa).

Alpha-D-glucose 1-phosphate-binding positions include Y100, G165, 182-183, and S200; that span reads EK.

It belongs to the bacterial/plant glucose-1-phosphate adenylyltransferase family. As to quaternary structure, homotetramer.

It carries out the reaction alpha-D-glucose 1-phosphate + ATP + H(+) = ADP-alpha-D-glucose + diphosphate. It participates in glycan biosynthesis; glycogen biosynthesis. In terms of biological role, involved in the biosynthesis of ADP-glucose, a building block required for the elongation reactions to produce glycogen. Catalyzes the reaction between ATP and alpha-D-glucose 1-phosphate (G1P) to produce pyrophosphate and ADP-Glc. This Bifidobacterium animalis subsp. lactis (strain AD011) protein is Glucose-1-phosphate adenylyltransferase.